Reading from the N-terminus, the 149-residue chain is D-aminoacyl-tRNA deacylase (149 aa).

The Gly-cisPro motif, important for rejection of L-amino acids motif lies at 137 to 138 (GP).

This sequence belongs to the DTD family. Homodimer.

Its subcellular location is the cytoplasm. It carries out the reaction glycyl-tRNA(Ala) + H2O = tRNA(Ala) + glycine + H(+). The catalysed reaction is a D-aminoacyl-tRNA + H2O = a tRNA + a D-alpha-amino acid + H(+). Its function is as follows. An aminoacyl-tRNA editing enzyme that deacylates mischarged D-aminoacyl-tRNAs. Also deacylates mischarged glycyl-tRNA(Ala), protecting cells against glycine mischarging by AlaRS. Acts via tRNA-based rather than protein-based catalysis; rejects L-amino acids rather than detecting D-amino acids in the active site. By recycling D-aminoacyl-tRNA to D-amino acids and free tRNA molecules, this enzyme counteracts the toxicity associated with the formation of D-aminoacyl-tRNA entities in vivo and helps enforce protein L-homochirality. The sequence is that of D-aminoacyl-tRNA deacylase from Clostridium botulinum (strain ATCC 19397 / Type A).